A 179-amino-acid chain; its full sequence is Large ribosomal subunit protein uL5 (179 aa).

Belongs to the universal ribosomal protein uL5 family. As to quaternary structure, part of the 50S ribosomal subunit; part of the 5S rRNA/L5/L18/L25 subcomplex. Contacts the 5S rRNA and the P site tRNA. Forms a bridge to the 30S subunit in the 70S ribosome.

This is one of the proteins that bind and probably mediate the attachment of the 5S RNA into the large ribosomal subunit, where it forms part of the central protuberance. In the 70S ribosome it contacts protein S13 of the 30S subunit (bridge B1b), connecting the 2 subunits; this bridge is implicated in subunit movement. Contacts the P site tRNA; the 5S rRNA and some of its associated proteins might help stabilize positioning of ribosome-bound tRNAs. The polypeptide is Large ribosomal subunit protein uL5 (Dichelobacter nodosus (strain VCS1703A)).